Consider the following 131-residue polypeptide: Lysosomal enzyme trafficking factor (131 aa).

2 helical membrane passes run M8–F28 and L66–L86.

The protein belongs to the LYSET family.

It is found in the golgi apparatus membrane. Required for mannose-6-phosphate-dependent trafficking of lysosomal enzymes. LYSET bridges GlcNAc-1-phosphate transferase (GNPTAB), to the membrane-bound transcription factor site-1 protease (MBTPS1), thus allowing proteolytic activation of the GNPTAB. GNPTAB is involved in the regulation of M6P-dependent Golgi-to-lysosome trafficking of lysosomal enzymes. LYSET is thus an essential factor for maturation and delivery of lysosomal hydrolases. The sequence is that of Lysosomal enzyme trafficking factor (LYSET) from Gallus gallus (Chicken).